Here is a 137-residue protein sequence, read N- to C-terminus: Holo-[acyl-carrier-protein] synthase (137 aa).

Residues Asp-8 and Glu-57 each contribute to the Mg(2+) site.

Belongs to the P-Pant transferase superfamily. AcpS family. Requires Mg(2+) as cofactor.

The protein localises to the cytoplasm. It carries out the reaction apo-[ACP] + CoA = holo-[ACP] + adenosine 3',5'-bisphosphate + H(+). Functionally, transfers the 4'-phosphopantetheine moiety from coenzyme A to a Ser of acyl-carrier-protein. The protein is Holo-[acyl-carrier-protein] synthase of Cereibacter sphaeroides (strain ATCC 17023 / DSM 158 / JCM 6121 / CCUG 31486 / LMG 2827 / NBRC 12203 / NCIMB 8253 / ATH 2.4.1.) (Rhodobacter sphaeroides).